Here is a 283-residue protein sequence, read N- to C-terminus: V-set domain containing T-cell activation inhibitor 1 (283 aa).

An N-terminal signal peptide occupies residues 1 to 24 (MASLGQIIFWSIINIIIILAGAIA). 2 consecutive Ig-like V-type domains span residues 35 to 144 (HFIT…ANLE) and 153 to 241 (PEIN…IKVT). 2 disulfides stabilise this stretch: Cys-56–Cys-130 and Cys-168–Cys-225. Asn-216 carries N-linked (GlcNAc...) asparagine glycosylation. The GPI-anchor amidated glycine moiety is linked to residue Gly-257. The propeptide at 258-283 (PSPCVFSSAFVAGWALLSLSCCLMLR) is removed in mature form.

The protein belongs to the immunoglobulin superfamily. BTN/MOG family. In terms of processing, N-glycosylated. Expressed on the surface of professional antigen-presenting cells (at protein level). Widely expressed, including in kidney, liver, lung, pancreas, placenta, prostate, spleen, testis and thymus.

Its subcellular location is the cell membrane. In terms of biological role, negatively regulates T-cell-mediated immune response by inhibiting T-cell activation, proliferation, cytokine production and development of cytotoxicity. When expressed on the cell surface of tumor macrophages, plays an important role, together with regulatory T-cells (Treg), in the suppression of tumor-associated antigen-specific T-cell immunity. Involved in promoting epithelial cell transformation. This Mus musculus (Mouse) protein is V-set domain containing T-cell activation inhibitor 1.